We begin with the raw amino-acid sequence, 396 residues long: Phosphopentomutase (396 aa).

Mn(2+)-binding residues include aspartate 13, aspartate 288, histidine 293, aspartate 329, histidine 330, and histidine 341.

This sequence belongs to the phosphopentomutase family. Requires Mn(2+) as cofactor.

The protein localises to the cytoplasm. It catalyses the reaction 2-deoxy-alpha-D-ribose 1-phosphate = 2-deoxy-D-ribose 5-phosphate. The enzyme catalyses alpha-D-ribose 1-phosphate = D-ribose 5-phosphate. Its pathway is carbohydrate degradation; 2-deoxy-D-ribose 1-phosphate degradation; D-glyceraldehyde 3-phosphate and acetaldehyde from 2-deoxy-alpha-D-ribose 1-phosphate: step 1/2. In terms of biological role, isomerase that catalyzes the conversion of deoxy-ribose 1-phosphate (dRib-1-P) and ribose 1-phosphate (Rib-1-P) to deoxy-ribose 5-phosphate (dRib-5-P) and ribose 5-phosphate (Rib-5-P), respectively. This Clostridium beijerinckii (strain ATCC 51743 / NCIMB 8052) (Clostridium acetobutylicum) protein is Phosphopentomutase.